Consider the following 819-residue polypeptide: MLLNSTRTLLLTYGRLLFAPGREGRQSRLAKGVSAWTVAAEGEKGGQLSPAPESTSCCGAAEVNEIKERDTKTCRQASSAGHNDLGLQEKEKSSGDESAFSSLGLNEEKRRALTLVLDGAPLFIGGGAGVGKSYMIQSIVTALRAKDLDVVVTASTGIAALNIGGSTFHSTFGVRVTSVGNSETNESCAVSILRYSKSLLAKVDVIVVDEVSLLHARHLEGLDIAARGAPGRIPHLPFGGIQVILCGDFMQLMHSTENCTSQDGGGDAGNKIGYRGDETTENTAGQNRSDVSSTAAVTDQGHIMSAVKNICVGERQRTSSGLIFESPLFLTCLLHLQLCEVKRHGDTAFLNDLNKLRQGVLTRRMMRSALVNPEDPNAIQLYPTRRSVAAFNESKMLELDGEEHLFRSIVESAGLSGPKGHASPNSRGANNVDGCNDVVVLHFLEKMRSSRRWQREVKKFVGQICTRCGISGIATSVVAPPYSSRQPYLKVYVHFCVSKQYDCLYPVAKMKAEWERSYYGTTPESKSARRFFGRVLFEVKHKNSLSTFLRASLKQAYSKVIESDNVLQSKRLKVGCRVILLRNLSNEYVNGSTGTVIGFQPVNKSRHLFPKGIRTQLSRKVYASLSRRPVVSSDSSAGSSENSYGGNGKEQALDVVNYDDVIVPIVRMDADGKDVAIPWLSLPLPDLQDRVFCTARVVTMPLVPAYAFTVHKTQGLTLDHSILLDCKGFFPCNHIIYVAASRVKKFSQLRMINVSPRMVTVHPGALHFSSSLPNVAEAETKWKKWKELQRMVNNGKALSASNPSVLELALYCATWKHHK.

The transit peptide at 1–84 directs the protein to the mitochondrion; that stretch reads MLLNSTRTLL…RQASSAGHND (84 aa). The disordered stretch occupies residues 76–101; the sequence is QASSAGHNDLGLQEKEKSSGDESAFS. 126–133 contributes to the ATP binding site; the sequence is GGAGVGKS. Residues 734-754 mediate DNA binding; it reads HIIYVAASRVKKFSQLRMINV.

This sequence belongs to the helicase family. PIF1 subfamily. As to quaternary structure, monomer. It depends on Mg(2+) as a cofactor.

The protein resides in the mitochondrion matrix. It localises to the kinetoplast. The enzyme catalyses Couples ATP hydrolysis with the unwinding of duplex DNA at the replication fork by translocating in the 5'-3' direction. This creates two antiparallel DNA single strands (ssDNA). The leading ssDNA polymer is the template for DNA polymerase III holoenzyme which synthesizes a continuous strand.. It carries out the reaction ATP + H2O = ADP + phosphate + H(+). In terms of biological role, DNA-dependent ATPase and 5'-3' DNA helicase required for the maintenance of mitochondrial (kinetoplast) genome stability. The sequence is that of ATP-dependent DNA helicase PIF4 from Trypanosoma brucei brucei (strain 927/4 GUTat10.1).